Here is a 160-residue protein sequence, read N- to C-terminus: Cytochrome c-type biogenesis protein CcmE (160 aa).

The Cytoplasmic portion of the chain corresponds to 1-8 (MSAPRKTR). The helical; Signal-anchor for type II membrane protein transmembrane segment at 9-29 (LYAILAVICGAVLTVALTLYA) threads the bilayer. At 30-160 (LSSNIDLFYT…PAAVTEGKRL (131 aa)) the chain is on the periplasmic side. Heme is bound by residues histidine 130 and tyrosine 134.

This sequence belongs to the CcmE/CycJ family.

It is found in the cell inner membrane. Its function is as follows. Heme chaperone required for the biogenesis of c-type cytochromes. Transiently binds heme delivered by CcmC and transfers the heme to apo-cytochromes in a process facilitated by CcmF and CcmH. The protein is Cytochrome c-type biogenesis protein CcmE of Pectobacterium carotovorum subsp. carotovorum (strain PC1).